A 30-amino-acid polypeptide reads, in one-letter code: Snaclec coagulation factor IX/factor X-binding protein subunit B (30 aa).

An intrachain disulfide couples cysteine 2 to cysteine 13. The C-type lectin domain occupies 9–30; sequence YEGHCYRVFTEPQNWADAEKFC.

Belongs to the snaclec family. In terms of assembly, heterodimer of subunits A and B; disulfide-linked. Post-translationally, glycosylated. Expressed by the venom gland.

The protein localises to the secreted. Its function is as follows. Anticoagulant protein which binds to the gamma-carboxyglutamic acid-domain regions of factors IX (F9) and factor X (F10) in the presence of calcium with a 1 to 1 stoichiometry. The polypeptide is Snaclec coagulation factor IX/factor X-binding protein subunit B (Bothrops jararaca (Jararaca)).